The sequence spans 167 residues: Lipoprotein signal peptidase (167 aa).

Helical transmembrane passes span 10-30, 68-88, and 98-118; these read LIWL…KAWV, WQLW…AFWL, and SAVP…DRLM. Residues aspartate 124 and aspartate 142 contribute to the active site. The helical transmembrane segment at 138-158 threads the bilayer; it reads FNIADSAIVGGAIGIALFGLF.

It belongs to the peptidase A8 family.

It localises to the cell inner membrane. The enzyme catalyses Release of signal peptides from bacterial membrane prolipoproteins. Hydrolyzes -Xaa-Yaa-Zaa-|-(S,diacylglyceryl)Cys-, in which Xaa is hydrophobic (preferably Leu), and Yaa (Ala or Ser) and Zaa (Gly or Ala) have small, neutral side chains.. It functions in the pathway protein modification; lipoprotein biosynthesis (signal peptide cleavage). Its function is as follows. This protein specifically catalyzes the removal of signal peptides from prolipoproteins. This chain is Lipoprotein signal peptidase, found in Xanthomonas campestris pv. campestris (strain 8004).